The sequence spans 341 residues: Methionine import ATP-binding protein MetN 2 (341 aa).

One can recognise an ABC transporter domain in the interval 2–241 (IELKEVVKEY…PQHTVTKRFV (240 aa)). Residue 38–45 (GFSGAGKS) participates in ATP binding.

Belongs to the ABC transporter superfamily. Methionine importer (TC 3.A.1.24) family. As to quaternary structure, the complex is composed of two ATP-binding proteins (MetN), two transmembrane proteins (MetI) and a solute-binding protein (MetQ).

It is found in the cell membrane. It carries out the reaction L-methionine(out) + ATP + H2O = L-methionine(in) + ADP + phosphate + H(+). The catalysed reaction is D-methionine(out) + ATP + H2O = D-methionine(in) + ADP + phosphate + H(+). In terms of biological role, part of the ABC transporter complex MetNIQ involved in methionine import. Responsible for energy coupling to the transport system. The chain is Methionine import ATP-binding protein MetN 2 from Staphylococcus aureus (strain bovine RF122 / ET3-1).